Reading from the N-terminus, the 31-residue chain is Photosystem II reaction center protein T (31 aa).

A helical transmembrane segment spans residues 3–23; sequence ALVYTFLLVGTLGIIFFAIFF.

This sequence belongs to the PsbT family. PSII is composed of 1 copy each of membrane proteins PsbA, PsbB, PsbC, PsbD, PsbE, PsbF, PsbH, PsbI, PsbJ, PsbK, PsbL, PsbM, PsbT, PsbY, PsbZ, Psb30/Ycf12, at least 3 peripheral proteins of the oxygen-evolving complex and a large number of cofactors. It forms dimeric complexes.

Its subcellular location is the plastid. The protein localises to the chloroplast thylakoid membrane. Found at the monomer-monomer interface of the photosystem II (PS II) dimer, plays a role in assembly and dimerization of PSII. PSII is a light-driven water plastoquinone oxidoreductase, using light energy to abstract electrons from H(2)O, generating a proton gradient subsequently used for ATP formation. This chain is Photosystem II reaction center protein T, found in Mesostigma viride (Green alga).